Here is a 331-residue protein sequence, read N- to C-terminus: Biotin synthase (331 aa).

The 230-residue stretch at 40-269 folds into the Radical SAM core domain; it reads YRVQLASLLS…HARVRLSAGR (230 aa). Cys-55, Cys-59, and Cys-62 together coordinate [4Fe-4S] cluster. Residues Cys-100, Cys-132, Cys-192, and Arg-264 each contribute to the [2Fe-2S] cluster site.

This sequence belongs to the radical SAM superfamily. Biotin synthase family. As to quaternary structure, homodimer. Requires [4Fe-4S] cluster as cofactor. It depends on [2Fe-2S] cluster as a cofactor.

The catalysed reaction is (4R,5S)-dethiobiotin + (sulfur carrier)-SH + 2 reduced [2Fe-2S]-[ferredoxin] + 2 S-adenosyl-L-methionine = (sulfur carrier)-H + biotin + 2 5'-deoxyadenosine + 2 L-methionine + 2 oxidized [2Fe-2S]-[ferredoxin]. It functions in the pathway cofactor biosynthesis; biotin biosynthesis; biotin from 7,8-diaminononanoate: step 2/2. Functionally, catalyzes the conversion of dethiobiotin (DTB) to biotin by the insertion of a sulfur atom into dethiobiotin via a radical-based mechanism. The protein is Biotin synthase of Synechococcus sp. (strain CC9605).